Here is a 711-residue protein sequence, read N- to C-terminus: Polyribonucleotide nucleotidyltransferase (711 aa).

Mg(2+) contacts are provided by Asp-486 and Asp-492. The 60-residue stretch at 553–612 folds into the KH domain; sequence PRIHTIKINPDKIKDVIGKGGSVIRALTEETGTTIEIEDDGTVKIAATDGEKAKHAIRRI. The region spanning 622–690 is the S1 motif domain; sequence GRVYTGKVTR…RQGRIRLSIK (69 aa). Positions 689–711 are disordered; the sequence is IKEATEQSQPAAAPEAPAAEQGE. Residues 694-711 show a composition bias toward low complexity; sequence EQSQPAAAPEAPAAEQGE.

This sequence belongs to the polyribonucleotide nucleotidyltransferase family. In terms of assembly, component of the RNA degradosome, which is a multiprotein complex involved in RNA processing and mRNA degradation. Mg(2+) is required as a cofactor.

It is found in the cytoplasm. The enzyme catalyses RNA(n+1) + phosphate = RNA(n) + a ribonucleoside 5'-diphosphate. In terms of biological role, involved in mRNA degradation. Catalyzes the phosphorolysis of single-stranded polyribonucleotides processively in the 3'- to 5'-direction. This is Polyribonucleotide nucleotidyltransferase from Escherichia coli (strain ATCC 8739 / DSM 1576 / NBRC 3972 / NCIMB 8545 / WDCM 00012 / Crooks).